Consider the following 375-residue polypeptide: Amylovoran biosynthesis protein AmsC (375 aa).

Helical transmembrane passes span 2–22 (AIYW…LAMI), 31–51 (KILI…FAGI), 93–113 (MVLA…LLFI), 162–182 (IAFI…FIVL), 208–228 (LPLV…KKLF), 256–276 (VFGL…LYYF), 287–307 (VYIL…FSDF), 309–329 (IFGG…FAFL), and 337–357 (LLNF…NTIL).

Its subcellular location is the cell membrane. It functions in the pathway glycan metabolism; exopolysaccharide biosynthesis. Functionally, involved in the biosynthesis of amylovoran which functions as a virulence factor. This chain is Amylovoran biosynthesis protein AmsC (amsC), found in Erwinia amylovora (Fire blight bacteria).